The chain runs to 518 residues: Apolipoprotein N-acyltransferase (518 aa).

The next 6 membrane-spanning stretches (helical) occupy residues 22–42, 63–83, 101–121, 134–154, 174–194, and 202–222; these read LAFI…LWII, FFHW…WVHV, ALLA…LAWF, LLFP…LTGF, IIGA…LALC, and LLIL…LSQI. The region spanning 234-484 is the CN hydrolase domain; it reads VQGNIPQSMK…TGVLSATIPL (251 aa). The active-site Proton acceptor is Glu-273. Lys-343 is a catalytic residue. Cys-395 functions as the Nucleophile in the catalytic mechanism. The chain crosses the membrane as a helical span at residues 492–512; that stretch reads AKIGQTPLLILCGALLLVGFI.

Belongs to the CN hydrolase family. Apolipoprotein N-acyltransferase subfamily.

The protein resides in the cell inner membrane. It catalyses the reaction N-terminal S-1,2-diacyl-sn-glyceryl-L-cysteinyl-[lipoprotein] + a glycerophospholipid = N-acyl-S-1,2-diacyl-sn-glyceryl-L-cysteinyl-[lipoprotein] + a 2-acyl-sn-glycero-3-phospholipid + H(+). The protein operates within protein modification; lipoprotein biosynthesis (N-acyl transfer). Its function is as follows. Catalyzes the phospholipid dependent N-acylation of the N-terminal cysteine of apolipoprotein, the last step in lipoprotein maturation. This chain is Apolipoprotein N-acyltransferase, found in Shewanella oneidensis (strain ATCC 700550 / JCM 31522 / CIP 106686 / LMG 19005 / NCIMB 14063 / MR-1).